A 165-amino-acid polypeptide reads, in one-letter code: HTH-type transcriptional regulator MmpR5 (165 aa).

One can recognise an HTH marR-type domain in the interval 1–151; that stretch reads MSVNDGVDQM…LLAYMENVVS (151 aa). The H-T-H motif DNA-binding region spans 53–76; sequence SEELATALAASSGGISTNARMLIQ.

In terms of assembly, homodimer.

In terms of biological role, controls the expression level of the Mmps2-MmpL2, MmpS4-MmpL4, and MmpS5-MmpL5 transport systems. Also controls its own expression. Acts by binding directly to the promoter regions. The sequence is that of HTH-type transcriptional regulator MmpR5 from Mycobacterium tuberculosis (strain ATCC 25618 / H37Rv).